Reading from the N-terminus, the 690-residue chain is BURP domain-containing protein 14 (690 aa).

Positions 1–26 (MAPPRHARLVAATIAVLLCHLPRSAA) are cleaved as a signal peptide. Residues 134 to 163 (GSSWSKSSSDGDGAAAAAAPAGGGGGGGGG) form a disordered region. A compositionally biased stretch (low complexity) spans 135–153 (SSWSKSSSDGDGAAAAAAP). The segment covering 154–163 (AGGGGGGGGG) has biased composition (gly residues). Residue N178 is glycosylated (N-linked (GlcNAc...) asparagine). Gly residues predominate over residues 201 to 211 (SNGGGGGGGGV). The interval 201 to 232 (SNGGGGGGGGVDSFRRYGKGSQGRNDSFTSYE) is disordered. Residues N225, N317, N379, N432, N450, and N601 are each glycosylated (N-linked (GlcNAc...) asparagine). A BURP domain is found at 477 to 689 (FFRERDLVAG…FQGDMTWTVA (213 aa)).

In terms of tissue distribution, expressed in panicles.

The chain is BURP domain-containing protein 14 (BURP14) from Oryza sativa subsp. japonica (Rice).